We begin with the raw amino-acid sequence, 698 residues long: Quillaic acid 3-O-glycosyltransferase CSL1 (698 aa).

A helical membrane pass occupies residues 14-34; it reads ALLSRLHILFHSALVASVFYY. The N-linked (GlcNAc...) asparagine glycan is linked to N38. Residues 42–62 traverse the membrane as a helical segment; that stretch reads GPAWALMTFAELTLAFIWALT. Residues K99 and E100 each coordinate UDP-alpha-D-glucose. The active site involves D129. N-linked (GlcNAc...) asparagine glycosylation is present at N317. S436 is a catalytic residue. 6 consecutive transmembrane segments (helical) span residues 478-498, 508-528, 546-566, 581-601, 636-656, and 669-689; these read WTSGLIGVGISKFSPFTYAMS, YAYFAFSGLFAVFFLIYGVVL, WLLAFAGVFISSLLQHLYEVL, IWIIKSITACLFGLLDAMLNK, MFMVPLMILVVFNLVSFFGGL, and FAQLFLSLFILALSYPIMEEI.

This sequence belongs to the glycosyltransferase 2 family. Plant cellulose synthase-like G subfamily. As to expression, mainly expressed in flowers and flower buds and, to a lesser extent, in leaves, stems and roots.

It localises to the golgi apparatus membrane. The protein operates within secondary metabolite biosynthesis; terpenoid biosynthesis. Component of the oleanane-type triterpene saponins (e.g. saponarioside A and saponarioside B) biosynthetic pathway, leading to the production of natural products with detergent properties used as traditional sources of soap. Glycosyltransferase that mediates the conversion of quillaic acid (QA) to QA-mono via the initiation of the C-3 sugar chain. The protein is Quillaic acid 3-O-glycosyltransferase CSL1 of Saponaria officinalis (Common soapwort).